A 264-amino-acid chain; its full sequence is 3-methyl-2-oxobutanoate hydroxymethyltransferase (264 aa).

Mg(2+)-binding residues include D45 and D84. 3-methyl-2-oxobutanoate is bound by residues 45-46 (DS), D84, and K112. E114 serves as a coordination point for Mg(2+). Catalysis depends on E181, which acts as the Proton acceptor.

It belongs to the PanB family. Homodecamer; pentamer of dimers. Requires Mg(2+) as cofactor.

It localises to the cytoplasm. It carries out the reaction 3-methyl-2-oxobutanoate + (6R)-5,10-methylene-5,6,7,8-tetrahydrofolate + H2O = 2-dehydropantoate + (6S)-5,6,7,8-tetrahydrofolate. The protein operates within cofactor biosynthesis; (R)-pantothenate biosynthesis; (R)-pantoate from 3-methyl-2-oxobutanoate: step 1/2. Functionally, catalyzes the reversible reaction in which hydroxymethyl group from 5,10-methylenetetrahydrofolate is transferred onto alpha-ketoisovalerate to form ketopantoate. This Shewanella sp. (strain MR-7) protein is 3-methyl-2-oxobutanoate hydroxymethyltransferase.